The primary structure comprises 118 residues: UPF0102 protein Bcav_2532 (118 aa).

Belongs to the UPF0102 family.

The polypeptide is UPF0102 protein Bcav_2532 (Beutenbergia cavernae (strain ATCC BAA-8 / DSM 12333 / CCUG 43141 / JCM 11478 / NBRC 16432 / NCIMB 13614 / HKI 0122)).